Here is a 1379-residue protein sequence, read N- to C-terminus: DNA-directed RNA polymerase subunit beta (1379 aa).

It belongs to the RNA polymerase beta chain family. The RNAP catalytic core consists of 2 alpha, 1 beta, 1 beta' and 1 omega subunit. When a sigma factor is associated with the core the holoenzyme is formed, which can initiate transcription.

The catalysed reaction is RNA(n) + a ribonucleoside 5'-triphosphate = RNA(n+1) + diphosphate. Functionally, DNA-dependent RNA polymerase catalyzes the transcription of DNA into RNA using the four ribonucleoside triphosphates as substrates. This is DNA-directed RNA polymerase subunit beta from Campylobacter fetus subsp. fetus (strain 82-40).